We begin with the raw amino-acid sequence, 303 residues long: Acetaldehyde dehydrogenase (303 aa).

The Acyl-thioester intermediate role is filled by Cys130. Residues 161 to 169 and Asn272 contribute to the NAD(+) site; that span reads SVGPGTRKN.

It belongs to the acetaldehyde dehydrogenase family.

It catalyses the reaction acetaldehyde + NAD(+) + CoA = acetyl-CoA + NADH + H(+). This is Acetaldehyde dehydrogenase from Verminephrobacter eiseniae (strain EF01-2).